A 161-amino-acid chain; its full sequence is MSSKNGVVRSCLGSMDDIKKVFQRFDKNGDGKISVDELKEVIRALSPTASPEETVTMMKQFDLDGNGFIDLDEFVALFQIGIGGGGNNRNDVSDLKEAFELYDLDGNGRISAKELHSVMKNLGEKCSVQDCKKMISKVDIDGDGCVNFDEFKKMMSNGGGA.

EF-hand domains are found at residues Gly13–Thr48, Ala49–Gly84, Asn90–Lys125, and Cys126–Ala161. Asp26, Asn28, Asp30, Lys32, Glu37, Asp62, Asp64, Asn66, Glu73, Asp103, Asp105, Asn107, Arg109, Glu114, Asp139, Asp141, Asp143, Cys145, and Glu150 together coordinate Ca(2+).

In terms of tissue distribution, expressed in seed coat, seedling radical, cotyledons, hypocotyl, shoot apex and elongating root. Expressed in the vasculature of cotyledons, leaves and roots. Highly expressed in guard cells, trichomes and hydathodes. Expressed in inflorescence stem branch points, silique abscission zone, young and mature styles and stigmatic papillae, mature anthers and developing seed.

Calcium-binding protein that may positively regulate abscisic acid (ABA) inhibition of germination and seedling development. May be required for photoperiod-induced flowering and function in ion homeostasis. This Arabidopsis thaliana (Mouse-ear cress) protein is Calcium-binding protein CML24 (CML24).